A 219-amino-acid chain; its full sequence is Clathrin light chain (219 aa).

The interval 32 to 136 (AEITGGSASA…KKEELRQQSK (105 aa)) is disordered. Residues 96 to 158 (PPPSREEPEK…SISKTKLASR (63 aa)) form an involved in binding clathrin heavy chain region. The segment covering 99-136 (SREEPEKIRKWREEQKQRLEEKDIEEERKKEELRQQSK) has biased composition (basic and acidic residues).

It belongs to the clathrin light chain family. As to quaternary structure, clathrin coats are formed from molecules containing 3 heavy chains and 3 light chains.

The protein resides in the cytoplasmic vesicle membrane. Its subcellular location is the membrane. It is found in the coated pit. Its function is as follows. Clathrin is the major protein of the polyhedral coat of coated pits and vesicles. This is Clathrin light chain (Clc) from Drosophila melanogaster (Fruit fly).